The sequence spans 1603 residues: MRTTKVYKLVIHKKGFGGSDDELVVNPKVFPHIKLGDIVEIAHPNDEYSPLLLQVKSLKEDLQKETISVDQTVTQVFRLRPYQDVYVNVVDPKDVTLDLVELTFKDQYIGRGDMWRLKKSLVSTCAYITQKVEFAGIRAQAGELWVKNEKVMCGYISEDTRVVFRSTSAMVYIFIQMSCEMWDFDIYGDLYFEKAVNGFLADLFTKWKEKNCSHEVTVVLFSRTFYDAKSVDEFPEINRASIRQDHKGRFYEDFYKVVVQNERREEWTSLLVTIKKLFIQYPVLVRLEQAEGFPQGDNSTSAQGNYLEAINLSFNVFDKHYINRNFDRTGQMSVVITPGVGVFEVDRLLMILTKQRMIDNGIGVDLVCMGEQPLHAVPLFKLHNRSAPRDSRLGDDYNIPHWINHSFYTSKSQLFCNSFTPRIKLAGKKPASEKAKNGRDTSLGSPKESENALPIQVDYDAYDAQVFRLPGPSRAQCLTTCRSVRERESHSRKSASSCDVSSSPSLPSRTLPTEEVRSQASDDSSLGKSANILMIPHPHLHQYEVSSSLGYTSTRDVLENMMEPPQRDSSAPGRFHVGSAESMLHVRPGGYTPQRALINPFAPSRMPMKLTSNRRRWMHTFPVGPSGEAIQIHHQTRQNMAELQGSGQRDPTHSSAELLELAYHEAAGRHSNSRQPGDGMSFLNFSGTEELSVGLLSNSGAGMNPRTQNKDSLEDSVSTSPDPILTLSAPPVVPGFCCTVGVDWKSLTTPACLPLTTDYFPDRQGLQNDYTEGCYDLLPEADIDRRDEDGVQMTAQQVFEEFICQRLMQGYQIIVQPKTQKPNPAVPPPLSSSPLYSRGLVSRNRPEEEDQYWLSMGRTFHKVTLKDKMITVTRYLPKYPYESAQIHYTYSLCPSHSDSEFVSCWVEFSHERLEEYKWNYLDQYICSAGSEDFSLIESLKFWRTRFLLLPACVTATKRITEGEAHCDIYGDRPRADEDEWQLLDGFVRFVEGLNRIRRRHRSDRMMRKGTAMKGLQMTGPISTHSLESTAPPVGKKGTSALSALLEMEASQKCLGEQQAAVHGGKSSAQSAESSSVAMTPTYMDSPRKDGAFFMEFVRSPRTASSAFYPQVSVDQTATPMLDGTSLGICTGQSMDRGNSQTFGNSQNIGEQGYSSTNSSDSSSQQLVASSLTSSSTLTEILEAMKHPSTGVQLLSEQKGLSPYCFISAEVVHWLVNHVEGIQTQAMAIDIMQKMLEEQLITHASGEAWRTFIYGFYFYKIVTDKEPDRVAMQQPATTWHTAGVDDFASFQRKWFEVAFVAEELVHSEIPAFLLPWLPSRPASYASRHSSFSRSFGGRSQAAALLAATVPEQRTVTLDVDVNNRTDRLEWCSCYYHGNFSLNAAFEIKLHWMAVTAAVLFEMVQGWHRKATSCGFLLVPVLEGPFALPSYLYGDPLRAQLFIPLNISCLLKEGSEHLFDSFEPETYWDRMHLFQEAIAHRFGFVQDKYSASAFNFPAENKPQYIHVTGTVFLQLPYSKRKFSGQQRRRRNSTSSTNQNMFCEERVGYNWAYNTMLTKTWRSSATGDEKFADRLLKDFTDFCINRDNRLVTFWTSCLEKMHASAP.

3 disordered regions span residues 427–450 (GKKPASEKAKNGRDTSLGSPKESE), 484–527 (VRER…SSLG), and 696–720 (LSNSGAGMNPRTQNKDSLEDSVSTS). Residues 430-439 (PASEKAKNGR) are compositionally biased toward basic and acidic residues. Residues 494-508 (SASSCDVSSSPSLPS) are compositionally biased toward low complexity. Ser-505 carries the post-translational modification Phosphoserine. 2 stretches are compositionally biased toward polar residues: residues 518-527 (SQASDDSSLG) and 696-707 (LSNSGAGMNPRT). Ser-1002 is subject to Phosphoserine; by PIM1. Positions 1135-1153 (DRGNSQTFGNSQNIGEQGY) are enriched in polar residues. The disordered stretch occupies residues 1135-1165 (DRGNSQTFGNSQNIGEQGYSSTNSSDSSSQQ). Residues 1154–1165 (SSTNSSDSSSQQ) are compositionally biased toward low complexity. A DEP domain is found at 1187–1262 (PSTGVQLLSE…YGFYFYKIVT (76 aa)). Residue Ser-1530 is modified to Phosphoserine; by PKB/AKT1 and PIM1.

The protein belongs to the IML1 family. In terms of assembly, within the GATOR complex, component of the GATOR1 subcomplex, made of DEPDC5, NPRL2 and NPRL3. GATOR1 mediates the strong interaction of the GATOR complex with small GTPases Rag (RagA/RRAGA, RagB/RRAGB, RagC/RRAGC and/or RagD/RRAGD) heterodimers. Interacts with SAMTOR; interaction is direct and takes place in presence of methionine, leading to inhibit the activity of the GATOR1 complex. In terms of processing, phosphorylation at Ser-1002 and Ser-1530 by AKT1 and PIM1 inhibit the activity of DEPDC5, releasing inhibition of the mTORC1 pathway. Post-translationally, ubiquitinated. Amino acid-induced 'Lys-48'-linked polyubiquitination of DEPDC5 by the BCR(KLHL22) ubiquitin ligase complex leads to DEPDC5 proteasomal degradation and inhibition of the GATOR1 complex. Ubiquitination may occur at multiple lysines. In terms of tissue distribution, expressed in developing and adult brain.

It localises to the lysosome membrane. The protein localises to the cytoplasm. The protein resides in the cytosol. It is found in the perinuclear region. In terms of biological role, as a component of the GATOR1 complex functions as an inhibitor of the amino acid-sensing branch of the mTORC1 pathway. In response to amino acid depletion, the GATOR1 complex has GTPase activating protein (GAP) activity and strongly increases GTP hydrolysis by RagA/RRAGA (or RagB/RRAGB) within heterodimeric Rag complexes, thereby turning them into their inactive GDP-bound form, releasing mTORC1 from lysosomal surface and inhibiting mTORC1 signaling. In the presence of abundant amino acids, the GATOR1 complex is negatively regulated by GATOR2, the other GATOR subcomplex, in this amino acid-sensing branch of the TORC1 pathway. Within the GATOR1 complex, DEPDC5 mediates direct interaction with the nucleotide-binding pocket of small GTPases Rag (RagA/RRAGA, RagB/RRAGB, RagC/RRAGC and/or RagD/RRAGD) and coordinates their nucleotide loading states by promoting RagA/RRAGA or RagB/RRAGB into their GDP-binding state and RagC/RRAGC or RagD/RRAGD into their GTP-binding state. However, it does not execute the GAP activity, which is mediated by NPRL2. The chain is GATOR1 complex protein DEPDC5 from Homo sapiens (Human).